The following is a 190-amino-acid chain: RNA pyrophosphohydrolase (190 aa).

The region spanning 6–149 (GYRPNVGIIL…KRDVYTQALN (144 aa)) is the Nudix hydrolase domain. Residues 38 to 59 (GGIKYGESPVQAMYRELHEEVG) carry the Nudix box motif. The segment at 167–190 (QRVHGPRSTDSPSSETDGHAHIAG) is disordered.

It belongs to the Nudix hydrolase family. RppH subfamily. A divalent metal cation serves as cofactor.

Accelerates the degradation of transcripts by removing pyrophosphate from the 5'-end of triphosphorylated RNA, leading to a more labile monophosphorylated state that can stimulate subsequent ribonuclease cleavage. The chain is RNA pyrophosphohydrolase from Bordetella pertussis (strain Tohama I / ATCC BAA-589 / NCTC 13251).